The primary structure comprises 27 residues: Delta-conotoxin TsVIA (27 aa).

Cystine bridges form between Cys-1–Cys-17, Cys-8–Cys-21, and Cys-16–Cys-25.

The protein belongs to the conotoxin O1 superfamily. In terms of tissue distribution, expressed by the venom duct.

It localises to the secreted. Functionally, delta-conotoxins bind to site 6 of voltage-gated sodium channels (Nav) and inhibit the inactivation process. This toxin inhibits tetrodotoxin(TTX)-sensitive sodium channels. A test on mouse Nav1.6/SCN8A confirms this sensitivity. The sequence is that of Delta-conotoxin TsVIA from Conus tessulatus (Tessellate cone).